The sequence spans 212 residues: MSSASSKRSVMTLFSNKDDIYCHQVKIVLAEKGVLYENAEVDLQALPEDLMELNPYGTVPTLVDRDLVLFNSRIIMEYLDERFPHPPLMQVYPVSRAKDRLLMLRIEQDWYPTLAKAENGTEKEKTSALKQLKEELLGIAPIFQQMPYFMNEEFGLVDCYVAPLLWKLKHLGVEFTGTGSKAIKAYMERVFTRDSFLQSVGEAAPKNLMDDK.

Residues 9 to 87 enclose the GST N-terminal domain; the sequence is SVMTLFSNKD…YLDERFPHPP (79 aa). Positions 92–212 constitute a GST C-terminal domain; it reads YPVSRAKDRL…AAPKNLMDDK (121 aa).

Belongs to the GST superfamily. HSP26 family.

Its function is as follows. Forms an equimolar complex with the RNA polymerase holoenzyme (RNAP) but not with the core enzyme. The polypeptide is Stringent starvation protein A homolog (sspA) (Haemophilus influenzae (strain ATCC 51907 / DSM 11121 / KW20 / Rd)).